Here is a 734-residue protein sequence, read N- to C-terminus: Photosystem I P700 chlorophyll a apoprotein A2 (734 aa).

Transmembrane regions (helical) follow at residues 46-69 (IFASHFGQLAIIFLWTSGNLFHVA), 135-158 (LYNGSMFLLFIATLALFAGWLHLE), 175-199 (LNHHLSALFGLSSLAWSGHLIHVAI), 273-291 (IAHHHLAIAVLFIVAGHMY), 330-353 (LHFQLGLALASLGVITSLVAQHMY), 369-395 (AALYTHHQYIAGFIMTGAFAHGAIFFI), 417-439 (AIISHLSWVTLFLGFHTLGLYVH), and 517-535 (FLVHHAIALGLHTTTLILV). Residues C559 and C568 each coordinate [4Fe-4S] cluster. 2 consecutive transmembrane segments (helical) span residues 575-596 (AFYLAVFWMLNTIGWTTFYWHW) and 643-665 (LAVWGWMFLFGHLVWATGFMFLI). 3 residues coordinate chlorophyll a: H654, M662, and Y670. A phylloquinone-binding site is contributed by W671. A helical membrane pass occupies residues 707–727 (LVGLAHFSVGYVFTYAAFLIA).

Belongs to the PsaA/PsaB family. The PsaA/B heterodimer binds the P700 chlorophyll special pair and subsequent electron acceptors. PSI consists of a core antenna complex that captures photons, and an electron transfer chain that converts photonic excitation into a charge separation. The eukaryotic PSI reaction center is composed of at least 11 subunits. It depends on P700 is a chlorophyll a/chlorophyll a' dimer, A0 is one or more chlorophyll a, A1 is one or both phylloquinones and FX is a shared 4Fe-4S iron-sulfur center. as a cofactor.

The protein localises to the plastid. The protein resides in the chloroplast thylakoid membrane. It catalyses the reaction reduced [plastocyanin] + hnu + oxidized [2Fe-2S]-[ferredoxin] = oxidized [plastocyanin] + reduced [2Fe-2S]-[ferredoxin]. Functionally, psaA and PsaB bind P700, the primary electron donor of photosystem I (PSI), as well as the electron acceptors A0, A1 and FX. PSI is a plastocyanin/cytochrome c6-ferredoxin oxidoreductase, converting photonic excitation into a charge separation, which transfers an electron from the donor P700 chlorophyll pair to the spectroscopically characterized acceptors A0, A1, FX, FA and FB in turn. Oxidized P700 is reduced on the lumenal side of the thylakoid membrane by plastocyanin or cytochrome c6. This is Photosystem I P700 chlorophyll a apoprotein A2 from Euglena gracilis.